The following is a 350-amino-acid chain: Uroporphyrinogen decarboxylase (350 aa).

Residues 28-32 (RQAGR), aspartate 78, tyrosine 155, serine 210, and histidine 325 contribute to the substrate site.

Belongs to the uroporphyrinogen decarboxylase family. Homodimer.

It is found in the cytoplasm. It catalyses the reaction uroporphyrinogen III + 4 H(+) = coproporphyrinogen III + 4 CO2. Its pathway is porphyrin-containing compound metabolism; protoporphyrin-IX biosynthesis; coproporphyrinogen-III from 5-aminolevulinate: step 4/4. Its function is as follows. Catalyzes the decarboxylation of four acetate groups of uroporphyrinogen-III to yield coproporphyrinogen-III. The protein is Uroporphyrinogen decarboxylase of Picosynechococcus sp. (strain ATCC 27264 / PCC 7002 / PR-6) (Agmenellum quadruplicatum).